A 291-amino-acid polypeptide reads, in one-letter code: 33 kDa chaperonin (291 aa).

2 disulfide bridges follow: cysteine 235-cysteine 237 and cysteine 268-cysteine 271.

Belongs to the HSP33 family. In terms of processing, under oxidizing conditions two disulfide bonds are formed involving the reactive cysteines. Under reducing conditions zinc is bound to the reactive cysteines and the protein is inactive.

It is found in the cytoplasm. Functionally, redox regulated molecular chaperone. Protects both thermally unfolding and oxidatively damaged proteins from irreversible aggregation. Plays an important role in the bacterial defense system toward oxidative stress. This chain is 33 kDa chaperonin, found in Bacillus subtilis (strain 168).